Here is a 141-residue protein sequence, read N- to C-terminus: Ribosome maturation factor RimP (141 aa).

It belongs to the RimP family.

It is found in the cytoplasm. Its function is as follows. Required for maturation of 30S ribosomal subunits. The protein is Ribosome maturation factor RimP of Laribacter hongkongensis (strain HLHK9).